The sequence spans 417 residues: Serine hydroxymethyltransferase (417 aa).

(6S)-5,6,7,8-tetrahydrofolate is bound by residues Leu116 and 120 to 122 (GHL). Lys225 carries the N6-(pyridoxal phosphate)lysine modification. 350–352 (SPF) contributes to the (6S)-5,6,7,8-tetrahydrofolate binding site.

The protein belongs to the SHMT family. Homodimer. It depends on pyridoxal 5'-phosphate as a cofactor.

Its subcellular location is the cytoplasm. The catalysed reaction is (6R)-5,10-methylene-5,6,7,8-tetrahydrofolate + glycine + H2O = (6S)-5,6,7,8-tetrahydrofolate + L-serine. It functions in the pathway one-carbon metabolism; tetrahydrofolate interconversion. It participates in amino-acid biosynthesis; glycine biosynthesis; glycine from L-serine: step 1/1. Its function is as follows. Catalyzes the reversible interconversion of serine and glycine with tetrahydrofolate (THF) serving as the one-carbon carrier. This reaction serves as the major source of one-carbon groups required for the biosynthesis of purines, thymidylate, methionine, and other important biomolecules. Also exhibits THF-independent aldolase activity toward beta-hydroxyamino acids, producing glycine and aldehydes, via a retro-aldol mechanism. This chain is Serine hydroxymethyltransferase, found in Ligilactobacillus salivarius (strain UCC118) (Lactobacillus salivarius).